We begin with the raw amino-acid sequence, 388 residues long: Succinate--CoA ligase [ADP-forming] subunit beta (388 aa).

Residues 9–244 enclose the ATP-grasp domain; that stretch reads KQLFARYGLP…QSQEDPREAQ (236 aa). ATP is bound by residues lysine 46, 53-55, glutamate 99, threonine 102, and glutamate 107; that span reads GRG. The Mg(2+) site is built by asparagine 199 and aspartate 213. Residues asparagine 264 and 321–323 contribute to the substrate site; that span reads GIV.

It belongs to the succinate/malate CoA ligase beta subunit family. As to quaternary structure, heterotetramer of two alpha and two beta subunits. Mg(2+) serves as cofactor.

The catalysed reaction is succinate + ATP + CoA = succinyl-CoA + ADP + phosphate. It catalyses the reaction GTP + succinate + CoA = succinyl-CoA + GDP + phosphate. It functions in the pathway carbohydrate metabolism; tricarboxylic acid cycle; succinate from succinyl-CoA (ligase route): step 1/1. Succinyl-CoA synthetase functions in the citric acid cycle (TCA), coupling the hydrolysis of succinyl-CoA to the synthesis of either ATP or GTP and thus represents the only step of substrate-level phosphorylation in the TCA. The beta subunit provides nucleotide specificity of the enzyme and binds the substrate succinate, while the binding sites for coenzyme A and phosphate are found in the alpha subunit. The chain is Succinate--CoA ligase [ADP-forming] subunit beta from Shigella dysenteriae serotype 1 (strain Sd197).